The sequence spans 349 residues: MSRVRYNNSVALPATQTVIKQNEDGLLTIQKDFPLPEIRSDRLLVRVEYVAINPCDWKMSERFPAPGAVDGCDFAGTVVALGSDVSKTGRFQVGEKVCGGVHGSNPIDPTTGSFAEYLSADAEFTFKVPGYMGLKEAAAVGGTGIGTMGLALSKSLGLPGSPTRPVGETDSKYVLVPIAVCSPKNYDLVKSYGAVKAFDYHSPTCAQDIRAYTKNRLAHIIDPIVEAKTMQLCYAAMGRAGGKYCALEAYADELCTRKVVKPELVMGMAILGRKVALNHGYGSEADAGKRAFGIEWYREMQDLLDAGRLMTHPVRVVPGRFDGIMKGLQMLKTKQVSGEKLIVQLGSNN.

55 to 58 serves as a coordination point for NADP(+); that stretch reads CDWK. Residue 143–150 coordinates substrate; the sequence is TGIGTMGL. NADP(+) is bound by residues 182–185, tyrosine 200, and 247–248; these read SPKN and LE. 267–271 provides a ligand contact to substrate; sequence GMAIL. An NADP(+)-binding site is contributed by 336 to 337; that stretch reads VS.

Belongs to the zinc-containing alcohol dehydrogenase family. Monomer.

It participates in mycotoxin biosynthesis. Trans-enoyl reductase; part of the gene cluster that mediates the biosynthesis of the mycotoxins phomacins, leucine-derived cytochalasans with potent actin polymerization-inhibitory activities and monocot-specific antigerminative activities. The first step in the pathway is catalyzed by the hybrid PKS-NRPS phmA, assisted by the enoyl reductase phmE, that are responsible for fusion of the leucine precursor and the polyketide backbone to produce a 2-pyrrolidone intermediate. The polyketide synthase module (PKS) of phmA is responsible for the synthesis of the polyketide backbone and the downstream nonribosomal peptide synthetase (NRPS) amidates the carboxyl end of the polyketide with the leucine precursor. Because phmA lacks a designated enoylreductase (ER) domain, the required activity is provided the enoyl reductase phmE. Reduction by the hydrolyase phmG, followed by dehydration and intra-molecular Diels-Alder cyclization by the Diels-Alderase phmD then yield the required isoindolone-fused macrocycle. A number of oxidative steps catalyzed by the tailoring cytochrome P450 monooxygenase phmB, the FAD-linked oxidoreductase phmC and the short-chain dehydrogenase/reductase phmF, are further required to afford the final products, phomacin D and phomacin E. The protein is Trans-enoyl reductase phmE of Phaeosphaeria nodorum (strain SN15 / ATCC MYA-4574 / FGSC 10173) (Glume blotch fungus).